Reading from the N-terminus, the 220-residue chain is FMN-dependent NADH:quinone oxidoreductase 1 (220 aa).

Residue 18–20 (SVS) coordinates FMN.

The protein belongs to the azoreductase type 1 family. As to quaternary structure, homodimer. FMN is required as a cofactor.

It catalyses the reaction 2 a quinone + NADH + H(+) = 2 a 1,4-benzosemiquinone + NAD(+). The enzyme catalyses N,N-dimethyl-1,4-phenylenediamine + anthranilate + 2 NAD(+) = 2-(4-dimethylaminophenyl)diazenylbenzoate + 2 NADH + 2 H(+). Functionally, quinone reductase that provides resistance to thiol-specific stress caused by electrophilic quinones. Also exhibits azoreductase activity. Catalyzes the reductive cleavage of the azo bond in aromatic azo compounds to the corresponding amines. The protein is FMN-dependent NADH:quinone oxidoreductase 1 of Bacillus anthracis.